The chain runs to 397 residues: Elongation factor Tu (397 aa).

One can recognise a tr-type G domain in the interval 10–207 (KPHVNIGTIG…ACDSYIPEPQ (198 aa)). Residues 19–26 (GHIDHGKT) are G1. A GTP-binding site is contributed by 19–26 (GHIDHGKT). Threonine 26 contacts Mg(2+). Residues 60 to 64 (GITIA) form a G2 region. Positions 81–84 (DCPG) are G3. GTP-binding positions include 81–85 (DCPGH) and 136–139 (NKCD). The segment at 136 to 139 (NKCD) is G4. A G5 region spans residues 174-176 (SAL).

Belongs to the TRAFAC class translation factor GTPase superfamily. Classic translation factor GTPase family. EF-Tu/EF-1A subfamily. As to quaternary structure, monomer.

Its subcellular location is the cytoplasm. It carries out the reaction GTP + H2O = GDP + phosphate + H(+). Functionally, GTP hydrolase that promotes the GTP-dependent binding of aminoacyl-tRNA to the A-site of ribosomes during protein biosynthesis. This Nitratidesulfovibrio vulgaris (strain DSM 19637 / Miyazaki F) (Desulfovibrio vulgaris) protein is Elongation factor Tu.